We begin with the raw amino-acid sequence, 447 residues long: Succinate--CoA ligase [ADP-forming] subunit beta, mitochondrial (447 aa).

Residues 1–34 (MFKLGRNRALASAFAATSRAPLASRLPSVSQQQR) constitute a mitochondrion transit peptide. The ATP-grasp domain maps to 45–287 (ADLLRQYGIG…TTQEDPDEVR (243 aa)). Residues Lys82, 89–91 (GRG), and Glu150 contribute to the ATP site. The Mg(2+) site is built by Asn242 and Asp256. Substrate contacts are provided by residues Asn307 and 364-366 (GIV).

This sequence belongs to the succinate/malate CoA ligase beta subunit family. In terms of assembly, heterodimer of an alpha and a beta subunit. Mg(2+) is required as a cofactor.

It localises to the mitochondrion. The catalysed reaction is succinate + ATP + CoA = succinyl-CoA + ADP + phosphate. It functions in the pathway carbohydrate metabolism; tricarboxylic acid cycle; succinate from succinyl-CoA (ligase route): step 1/1. Succinyl-CoA synthetase functions in the citric acid cycle (TCA), coupling the hydrolysis of succinyl-CoA to the synthesis of ATP and thus represents the only step of substrate-level phosphorylation in the TCA. The beta subunit provides nucleotide specificity of the enzyme and binds the substrate succinate, while the binding sites for coenzyme A and phosphate are found in the alpha subunit. This chain is Succinate--CoA ligase [ADP-forming] subunit beta, mitochondrial, found in Neurospora crassa (strain ATCC 24698 / 74-OR23-1A / CBS 708.71 / DSM 1257 / FGSC 987).